We begin with the raw amino-acid sequence, 432 residues long: Glutamyl-tRNA reductase (432 aa).

Residues 55-58, serine 114, 119-121, and glutamine 125 contribute to the substrate site; these read TCNR and ETQ. The Nucleophile role is filled by cysteine 56. 194–199 lines the NADP(+) pocket; sequence GAGEMI.

It belongs to the glutamyl-tRNA reductase family. In terms of assembly, homodimer.

The catalysed reaction is (S)-4-amino-5-oxopentanoate + tRNA(Glu) + NADP(+) = L-glutamyl-tRNA(Glu) + NADPH + H(+). It functions in the pathway porphyrin-containing compound metabolism; protoporphyrin-IX biosynthesis; 5-aminolevulinate from L-glutamyl-tRNA(Glu): step 1/2. In terms of biological role, catalyzes the NADPH-dependent reduction of glutamyl-tRNA(Glu) to glutamate 1-semialdehyde (GSA). In Burkholderia pseudomallei (strain 1710b), this protein is Glutamyl-tRNA reductase.